Reading from the N-terminus, the 422-residue chain is MMEKFRVIGSDKPLSGEVTISGAKNAALPILFASILAEEPVEVSNVPHLRDIDTTMELLKRLGAKVSRNGSVHVDGREINEFCAPYDLVKTMRASIWALGPLVARFGEGQVSLPGGCAIGARPVDLHIHGLEQLGATIVLEDGYVKASVDGRLKGAHIVMDKVSVGATITIMCAATLAEGTTVLDNSAREPEIVDTADFLNKLGAKISGAGTDTITIEGVERLGGGQHSVVADRIETGTFLVAAAVSGGKVVCRNTNAHLLEAALAKLEEAGAKVETGEGWISLDMTDRELKAVKIVTAPHPGFPTDMQAQFTLLNMMAKGSGVITETIFENRFMHIPELQRMGAKAEIEGNTAICGETEKLSGAQVMATDLRASASLVIAGCIAQGETIVDRIYHIDRGYDKIEDKLSALGANITRFSESN.

24–25 (KN) is a binding site for phosphoenolpyruvate. Arginine 93 serves as a coordination point for UDP-N-acetyl-alpha-D-glucosamine. The active-site Proton donor is the cysteine 117. Position 117 is a 2-(S-cysteinyl)pyruvic acid O-phosphothioketal (cysteine 117). UDP-N-acetyl-alpha-D-glucosamine contacts are provided by residues 122-126 (RPVDL), 162-165 (KVSV), aspartate 307, and isoleucine 329.

This sequence belongs to the EPSP synthase family. MurA subfamily.

It is found in the cytoplasm. The enzyme catalyses phosphoenolpyruvate + UDP-N-acetyl-alpha-D-glucosamine = UDP-N-acetyl-3-O-(1-carboxyvinyl)-alpha-D-glucosamine + phosphate. Its pathway is cell wall biogenesis; peptidoglycan biosynthesis. Cell wall formation. Adds enolpyruvyl to UDP-N-acetylglucosamine. The chain is UDP-N-acetylglucosamine 1-carboxyvinyltransferase from Vibrio atlanticus (strain LGP32) (Vibrio splendidus (strain Mel32)).